The chain runs to 286 residues: Putative cyclin-H (286 aa).

The Cyclin N-terminal domain occupies 79–148 (AIIYIKRFYL…ILESLNFNLI (70 aa)). Residues 235 to 286 (NNNNNNNNNNNNNNNNNNNNNNNNNNNNNNNNNNNNNNNNNNNNNNNNNLLL) are disordered.

Belongs to the cyclin family. Cyclin C subfamily.

It localises to the nucleus. Its function is as follows. May regulate cdk7 involved in transcription regulation and cell cycle progression. The polypeptide is Putative cyclin-H (cycH) (Dictyostelium discoideum (Social amoeba)).